The chain runs to 213 residues: Putative protein Brevis radix-like 3 (213 aa).

Residues 7-27 form a disordered region; that stretch reads CSSKEGGEDGSRGAATPHGRD. Positions 158–213 constitute a BRX domain; that stretch reads REWTAQVEPGVQITFVTLPGGGNDLKRIRFSRERFGEDRAKVWWEHNRDRIQAQYL.

The protein belongs to the BRX family.

It is found in the nucleus. The sequence is that of Putative protein Brevis radix-like 3 (BRXL3) from Oryza sativa subsp. japonica (Rice).